The sequence spans 852 residues: Alanine--tRNA ligase (852 aa).

The Zn(2+) site is built by histidine 554, histidine 558, cysteine 656, and histidine 660.

This sequence belongs to the class-II aminoacyl-tRNA synthetase family. Zn(2+) serves as cofactor.

The protein localises to the cytoplasm. The catalysed reaction is tRNA(Ala) + L-alanine + ATP = L-alanyl-tRNA(Ala) + AMP + diphosphate. Catalyzes the attachment of alanine to tRNA(Ala) in a two-step reaction: alanine is first activated by ATP to form Ala-AMP and then transferred to the acceptor end of tRNA(Ala). Also edits incorrectly charged Ser-tRNA(Ala) and Gly-tRNA(Ala) via its editing domain. In Campylobacter concisus (strain 13826), this protein is Alanine--tRNA ligase.